The following is a 642-amino-acid chain: Threonine--tRNA ligase (642 aa).

A TGS domain is found at 1–61 (MPVITLPDGS…ENDATLAIIT (61 aa)). A catalytic region spans residues 243-534 (DHRKIGKQLD…LTEEFAGFFP (292 aa)). Cys334, His385, and His511 together coordinate Zn(2+).

It belongs to the class-II aminoacyl-tRNA synthetase family. Homodimer. It depends on Zn(2+) as a cofactor.

The protein resides in the cytoplasm. It catalyses the reaction tRNA(Thr) + L-threonine + ATP = L-threonyl-tRNA(Thr) + AMP + diphosphate + H(+). In terms of biological role, catalyzes the attachment of threonine to tRNA(Thr) in a two-step reaction: L-threonine is first activated by ATP to form Thr-AMP and then transferred to the acceptor end of tRNA(Thr). Also edits incorrectly charged L-seryl-tRNA(Thr). The polypeptide is Threonine--tRNA ligase (Salmonella choleraesuis (strain SC-B67)).